Reading from the N-terminus, the 311-residue chain is NEDD4 family-interacting protein 2 (311 aa).

The interval 1-133 is disordered; that stretch reads RRSASDAELS…PPYSSITVEA (133 aa). The Cytoplasmic segment spans residues 1–206; that stretch reads RRSASDAELS…VEQLRVGNDG (206 aa). Low complexity predominate over residues 7–22; that stretch reads AELSAGAEGATGSEAA. A compositionally biased stretch (gly residues) spans 26 to 37; sequence DLGGRTRGGGRG. Low complexity predominate over residues 38–47; sequence SAAAAATTST. Basic and acidic residues predominate over residues 48–75; sequence REAEGAERRGDTPARKPDPEAGRMDHHQ. Polar residues predominate over residues 92–101; the sequence is ESSAVEQPST. Over residues 102-120 the composition is skewed to low complexity; it reads SSLAAPTVEAAASAPALDP. Residues 123–126 are interaction with NEDD4; it reads PPPY. Positions 123 to 126 match the PPxY motif 1 motif; the sequence is PPPY. Phosphotyrosine; by SRC occurs at positions 126, 142, 146, and 152. 2 short sequence motifs (PPxY motif) span residues 149–152 and 159–161; these read PPPY and PTY. The helical transmembrane segment at 207–227 threads the bilayer; sequence IFMLAFFMAFIFNWLGFCLSF. The Extracellular segment spans residues 228–232; it reads CITNT. The chain crosses the membrane as a helical span at residues 233–253; sequence IAGRYGAICGFGLSLIKWILI. Residues 254–262 lie on the Cytoplasmic side of the membrane; the sequence is VRFSDYFTG. Residues 263–283 traverse the membrane as a helical segment; the sequence is YFNGQYWLWWIFLVLGLLLFF. Residues 284–311 are Extracellular-facing; sequence RGFVNYLKVRNMSESMAAAHRTRYFFLL.

As to quaternary structure, forms heterodimers with NDFIP1. Interacts with HECT domain-containing E3 ubiquitin-protein ligases, including NEDD4. Interacts with NEDD4L. When phosphorylated at Tyr-142, interacts with SRC and LYN SH2 domain. May thus act as a scaffold that recruits SRC to NDFIP1, enhancing NDFIP1 phosphorylation. Interacts with SLC11A2/DMT1. May interact with phosphorylated EGFR. Interacts with KCNH2. In terms of processing, ubiquitinated by NEDD4 and NEDD4L; which does not affect turnover. Also ubiquitinated by ITCH. Post-translationally, undergoes transient tyrosine-phosphorylation following EGF stimulation, most probably catalyzed by SRC. Phosphorylation on Tyr-126, Tyr-146 and Tyr-152 are dependent on the phosphorylation on Tyr-142. Also phosphorylated by LYN and FYN. In terms of tissue distribution, ubiquitously expressed, with highest levels in brain, liver, kidney and testis.

Its subcellular location is the endosome membrane. The protein localises to the golgi apparatus membrane. It localises to the endosome. It is found in the multivesicular body membrane. Functionally, activates HECT domain-containing E3 ubiquitin-protein ligases, including ITCH, NEDD4, NEDD4L, SMURF2, WWP1 and WWP2, and consequently modulates the stability of their targets. As a result, may control many cellular processes. Recruits ITCH, NEDD4 and SMURF2 to endosomal membranes. Negatively regulates KCNH2 potassium channel activity by decreasing its cell-surface expression and interfering with channel maturation through recruitment of NEDD4L to the Golgi apparatus and multivesicular body where it mediates KCNH2 degradation. May modulate EGFR signaling. Together with NDFIP1, limits the cytokine signaling and expansion of effector Th2 T-cells by promoting degradation of JAK1, probably by ITCH- and NEDD4L-mediated ubiquitination. The chain is NEDD4 family-interacting protein 2 (Ndfip2) from Mus musculus (Mouse).